The chain runs to 92 residues: C-C motif chemokine 3 (92 aa).

The first 23 residues, 1–23, serve as a signal peptide directing secretion; sequence MKVSTAALAVLLCTMALWNEVFS. Cystine bridges form between cysteine 34-cysteine 57 and cysteine 35-cysteine 73.

It belongs to the intercrine beta (chemokine CC) family. As to quaternary structure, self-associates. Also heterodimer of MIP-1-alpha(4-69) and MIP-1-beta(3-69). Interacts with CCR1.

It is found in the secreted. In terms of biological role, monokine with inflammatory and chemokinetic properties. Binds to CCR1, CCR4 and CCR5. One of the major HIV-suppressive factors produced by CD8+ T-cells. Recombinant MIP-1-alpha induces a dose-dependent inhibition of different strains of HIV-1, HIV-2, and simian immunodeficiency virus (SIV). This chain is C-C motif chemokine 3 (Ccl3), found in Rattus norvegicus (Rat).